A 596-amino-acid polypeptide reads, in one-letter code: Chaperone protein DnaK (596 aa).

At threonine 180 the chain carries Phosphothreonine; by autocatalysis.

The protein belongs to the heat shock protein 70 family.

Acts as a chaperone. This Thermosipho melanesiensis (strain DSM 12029 / CIP 104789 / BI429) protein is Chaperone protein DnaK.